Reading from the N-terminus, the 800-residue chain is Endoglucanase (800 aa).

Positions 1–30 (MMLRKKTKQLISSILILVLLLSLFPTALAA) are cleaved as a signal peptide. The active-site Proton donor is glutamate 190. Glutamate 305 serves as the catalytic Nucleophile. A disordered region spans residues 761 to 800 (AATTEPVEPEPVDPGEETPPVDEKEAKTEQKEAEKEEKEE). Positions 767–780 (VEPEPVDPGEETPP) are enriched in acidic residues. The span at 781–800 (VDEKEAKTEQKEAEKEEKEE) shows a compositional bias: basic and acidic residues.

This sequence belongs to the glycosyl hydrolase 5 (cellulase A) family.

It catalyses the reaction Endohydrolysis of (1-&gt;4)-beta-D-glucosidic linkages in cellulose, lichenin and cereal beta-D-glucans.. The sequence is that of Endoglucanase from Halalkalibacter akibai (strain ATCC 43226 / DSM 21942 / CIP 109018 / JCM 9157 / 1139) (Bacillus akibai).